A 140-amino-acid chain; its full sequence is Large ribosomal subunit protein uL14 (140 aa).

Residue Ser17 is modified to Phosphoserine. Tyr38 carries the post-translational modification Phosphotyrosine.

The protein belongs to the universal ribosomal protein uL14 family. Component of the large ribosomal subunit.

Its subcellular location is the cytoplasm. In terms of biological role, component of the large ribosomal subunit. The ribosome is a large ribonucleoprotein complex responsible for the synthesis of proteins in the cell. This chain is Large ribosomal subunit protein uL14 (RPL23), found in Pongo abelii (Sumatran orangutan).